Here is a 411-residue protein sequence, read N- to C-terminus: Secretion apparatus protein BsaZ (411 aa).

4 helical membrane-spanning segments follow: residues 28–48, 80–100, 137–157, and 175–195; these read IVAL…VDLT, IAAP…LVQS, ALLY…LYHA, and IVLT…VLIL. A disordered region spans residues 341–411; it reads AANRGGPPPE…APARTGDQNA (71 aa). Residues 370–404 show a composition bias toward low complexity; the sequence is DACADNAFPDDAPPGAAAPNAGSPDGPAPDGGAPA.

This sequence belongs to the type III secretion exporter family.

The protein localises to the cell membrane. In terms of biological role, part of the bsa type III secretion system, is involved in the intracellular replication of invading bacteria inside the host cell. Probably necessary for the lysis of the vacuole membrane and escape into the host cell cytoplasm. In Burkholderia pseudomallei (strain K96243), this protein is Secretion apparatus protein BsaZ (bsaZ).